We begin with the raw amino-acid sequence, 177 residues long: O-acetyl-ADP-ribose deacetylase (177 aa).

Residues 1 to 175 enclose the Macro domain; sequence MKTRIHVVQG…LYERLLTQQG (175 aa). Residues 11–12, Asn25, 33–35, and 122–126 contribute to the substrate site; these read DI, GVD, and STGVY. Asp35 (proton acceptor) is an active-site residue.

This sequence belongs to the MacroD-type family. YmdB subfamily. Homodimer. Interacts with RNase III.

It carries out the reaction 3''-O-acetyl-ADP-D-ribose + H2O = ADP-D-ribose + acetate + H(+). The enzyme catalyses 2''-O-acetyl-ADP-D-ribose + H2O = ADP-D-ribose + acetate + H(+). Its function is as follows. Deacetylates O-acetyl-ADP ribose to yield ADP-ribose and free acetate. Down-regulates ribonuclease 3 (RNase III) activity. Acts by interacting directly with the region of the ribonuclease that is required for dimerization/activation. In Escherichia coli O157:H7, this protein is O-acetyl-ADP-ribose deacetylase.